The sequence spans 1709 residues: Hybrid signal transduction histidine kinase L (1709 aa).

Disordered stretches follow at residues 52–192 (SNNN…SPPH), 206–276 (FFSG…NSSD), 413–535 (TSNS…NNSC), and 554–615 (QQQQ…IFNN). Low complexity predominate over residues 53 to 87 (NNNNNNNNNNNNNNNNNNNNNNNNNNNNNNNNNNN). Residues 88–100 (NEEKSNNETEKTL) show a composition bias toward basic and acidic residues. Positions 106–148 (TTTTTTTNNNNNNNNNNNNNNNNNNNNNNNNNNNNNNNNNNTN) are enriched in low complexity. Polar residues predominate over residues 149–170 (SSNDIYMNSPSSTLSSPGNAGN). Low complexity-rich tracts occupy residues 413 to 466 (TSNS…TPNS), 486 to 535 (NNSP…NNSC), and 554 to 576 (QQQQQQQSQPTTPTQSTQSPTTS). A compositionally biased stretch (polar residues) spans 585-610 (LTINTSFKTSPMSSPKSFNKPSQSPQ). The 72-residue stretch at 700-771 (ATRKMVTCIE…ATLTDKKTWN (72 aa)) folds into the PAS domain. Residues 770 to 822 (WNGFIRTRHNNNTLIYFEASISPVLDQFQQILYYNCTKRDVTQKRIDEESKTL) form the PAC domain. The 223-residue stretch at 837 to 1059 (MMSHDIRTPM…TFTCILKFKK (223 aa)) folds into the Histidine kinase domain. Position 840 is a phosphohistidine; by autocatalysis (H840). 2 disordered regions span residues 1068–1112 (LLPA…HQQH) and 1137–1298 (QHQL…PTSP). Composition is skewed to low complexity over residues 1075–1112 (LQQQQQQQQHQQQTQFHQHQQQTQFHQHQQQQLQHQQH), 1137–1153 (QHQLQQRQHHQQQLQQQ), and 1176–1194 (NQHIQQQQQQQQQQQQQQQ). Over residues 1204–1221 (HNSHGHNHHGSHHNHNHQ) the composition is skewed to basic residues. Polar residues-rich tracts occupy residues 1244–1257 (NEQQLESITENSFS) and 1275–1298 (NISQSPSPQSIHNGTTINQQPTSP). Response regulatory domains lie at 1312–1492 (KMLF…MMYL) and 1570–1692 (KVLV…KKYG). D1366 bears the 4-aspartylphosphate mark. Low complexity-rich tracts occupy residues 1390 to 1412 (QHLQQQQEQEQQQQQEQQQSELQ) and 1420 to 1440 (KNSSQNNDNNNNNNKSNSSGG). A disordered region spans residues 1390–1440 (QHLQQQQEQEQQQQQEQQQSELQKQPDVENKNSSQNNDNNNNNNKSNSSGG). D1622 carries the 4-aspartylphosphate modification.

Post-translationally, activation probably requires transfer of a phosphate group between a histidine in the kinase core (transmitter) domain and an aspartate of the receiver domain.

The catalysed reaction is ATP + protein L-histidine = ADP + protein N-phospho-L-histidine.. Acts as a receptor histidine kinase for a signal transduction pathway. This protein undergoes an ATP-dependent autophosphorylation at a conserved histidine residue in the kinase core, and a phosphoryl group is then transferred to a conserved aspartate residue in the receiver domain. The sequence is that of Hybrid signal transduction histidine kinase L (dhkL) from Dictyostelium discoideum (Social amoeba).